Here is a 545-residue protein sequence, read N- to C-terminus: Glucose-6-phosphate isomerase (545 aa).

The active-site Proton donor is the E351. Catalysis depends on residues H382 and K510.

This sequence belongs to the GPI family.

Its subcellular location is the cytoplasm. It carries out the reaction alpha-D-glucose 6-phosphate = beta-D-fructose 6-phosphate. Its pathway is carbohydrate biosynthesis; gluconeogenesis. The protein operates within carbohydrate degradation; glycolysis; D-glyceraldehyde 3-phosphate and glycerone phosphate from D-glucose: step 2/4. Its function is as follows. Catalyzes the reversible isomerization of glucose-6-phosphate to fructose-6-phosphate. This chain is Glucose-6-phosphate isomerase, found in Helicobacter pylori (strain G27).